The chain runs to 149 residues: Transcriptional repressor NrdR (149 aa).

The segment at cysteine 3–cysteine 34 is a zinc-finger region. The region spanning proline 49 to glutamate 139 is the ATP-cone domain.

It belongs to the NrdR family. Zn(2+) is required as a cofactor.

In terms of biological role, negatively regulates transcription of bacterial ribonucleotide reductase nrd genes and operons by binding to NrdR-boxes. The polypeptide is Transcriptional repressor NrdR (Aeromonas hydrophila subsp. hydrophila (strain ATCC 7966 / DSM 30187 / BCRC 13018 / CCUG 14551 / JCM 1027 / KCTC 2358 / NCIMB 9240 / NCTC 8049)).